The chain runs to 445 residues: Exodeoxyribonuclease 7 large subunit (445 aa).

The protein belongs to the XseA family. In terms of assembly, heterooligomer composed of large and small subunits.

The protein localises to the cytoplasm. It catalyses the reaction Exonucleolytic cleavage in either 5'- to 3'- or 3'- to 5'-direction to yield nucleoside 5'-phosphates.. Bidirectionally degrades single-stranded DNA into large acid-insoluble oligonucleotides, which are then degraded further into small acid-soluble oligonucleotides. The chain is Exodeoxyribonuclease 7 large subunit from Xanthomonas axonopodis pv. citri (strain 306).